The chain runs to 579 residues: Proteasome-associated ATPase (579 aa).

The segment at 1-21 is disordered; the sequence is MPRDETPEREHAEQQSRQALE. Residues 8–86 adopt a coiled-coil conformation; sequence EREHAEQQSR…REEVEKLTQP (79 aa). 268-273 contacts ATP; that stretch reads GCGKTL. The docks into pockets in the proteasome alpha-ring stretch occupies residues 578–579; that stretch reads YL.

This sequence belongs to the AAA ATPase family. As to quaternary structure, homohexamer. Assembles into a hexameric ring structure that caps the 20S proteasome core. Strongly interacts with the prokaryotic ubiquitin-like protein Pup through a hydrophobic interface; the interacting region of ARC lies in its N-terminal coiled-coil domain. There is one Pup binding site per ARC hexamer ring. Upon ATP-binding, the C-terminus of ARC interacts with the alpha-rings of the proteasome core, possibly by binding to the intersubunit pockets.

It participates in protein degradation; proteasomal Pup-dependent pathway. ATPase which is responsible for recognizing, binding, unfolding and translocation of pupylated proteins into the bacterial 20S proteasome core particle. May be essential for opening the gate of the 20S proteasome via an interaction with its C-terminus, thereby allowing substrate entry and access to the site of proteolysis. Thus, the C-termini of the proteasomal ATPase may function like a 'key in a lock' to induce gate opening and therefore regulate proteolysis. This chain is Proteasome-associated ATPase, found in Acidimicrobium ferrooxidans (strain DSM 10331 / JCM 15462 / NBRC 103882 / ICP).